Here is a 137-residue protein sequence, read N- to C-terminus: Large ribosomal subunit protein uL16 (137 aa).

Positions 1–13 are enriched in basic residues; the sequence is MLQPSRRKYRKEQ. Residues 1–22 form a disordered region; the sequence is MLQPSRRKYRKEQKGRNTGLAT.

It belongs to the universal ribosomal protein uL16 family. In terms of assembly, part of the 50S ribosomal subunit.

Binds 23S rRNA and is also seen to make contacts with the A and possibly P site tRNAs. The chain is Large ribosomal subunit protein uL16 from Azoarcus sp. (strain BH72).